Reading from the N-terminus, the 355-residue chain is Uroporphyrinogen decarboxylase (355 aa).

Substrate is bound by residues 27 to 31 (RQAGR), Asp-78, Tyr-155, Thr-210, and His-328.

This sequence belongs to the uroporphyrinogen decarboxylase family. In terms of assembly, homodimer.

Its subcellular location is the cytoplasm. The enzyme catalyses uroporphyrinogen III + 4 H(+) = coproporphyrinogen III + 4 CO2. Its pathway is porphyrin-containing compound metabolism; protoporphyrin-IX biosynthesis; coproporphyrinogen-III from 5-aminolevulinate: step 4/4. Its function is as follows. Catalyzes the decarboxylation of four acetate groups of uroporphyrinogen-III to yield coproporphyrinogen-III. The polypeptide is Uroporphyrinogen decarboxylase (Pseudomonas fluorescens (strain Pf0-1)).